We begin with the raw amino-acid sequence, 146 residues long: Late protein H7 (146 aa).

A helical transmembrane segment spans residues 10 to 32 (LAMTAFFGELNTLDIMALIMSIF).

This sequence belongs to the chordopoxvirinae H7 family.

Its subcellular location is the membrane. Functionally, contributes to the formation of crescents and immature virions (IV). The polypeptide is Late protein H7 (Vaccinia virus (strain Tian Tan) (VACV)).